The sequence spans 286 residues: MKDDLFIALQRIIPHHAFSRLVGWFAATKIRWIKHLFITKFINAYNVNMAEALEPNPENYANFNDFFVRALKPDARPIASEANAIVSPADGAVSQLGEISGDKIFQAKNHWFSIKELLACDDELAEQFMGGSFATIYLSPSDYHRVHMPAAGLLTQMNYIPGDLFSVNPVTTENVAGLFARNERIAAIFDTEFGPMAVVMVGAMIVASIETVWDGQITPASREVKRNVYSKPREIKLGKGDEMGRFKLGSTAVLLFPKGAIKWKEDIKAETTLRMGEMIAELQTQA.

Active-site charge relay system; for autoendoproteolytic cleavage activity residues include aspartate 90, histidine 147, and serine 250. Serine 250 acts as the Schiff-base intermediate with substrate; via pyruvic acid; for decarboxylase activity in catalysis. A Pyruvic acid (Ser); by autocatalysis modification is found at serine 250.

This sequence belongs to the phosphatidylserine decarboxylase family. PSD-B subfamily. Prokaryotic type I sub-subfamily. Heterodimer of a large membrane-associated beta subunit and a small pyruvoyl-containing alpha subunit. The cofactor is pyruvate. In terms of processing, is synthesized initially as an inactive proenzyme. Formation of the active enzyme involves a self-maturation process in which the active site pyruvoyl group is generated from an internal serine residue via an autocatalytic post-translational modification. Two non-identical subunits are generated from the proenzyme in this reaction, and the pyruvate is formed at the N-terminus of the alpha chain, which is derived from the carboxyl end of the proenzyme. The autoendoproteolytic cleavage occurs by a canonical serine protease mechanism, in which the side chain hydroxyl group of the serine supplies its oxygen atom to form the C-terminus of the beta chain, while the remainder of the serine residue undergoes an oxidative deamination to produce ammonia and the pyruvoyl prosthetic group on the alpha chain. During this reaction, the Ser that is part of the protease active site of the proenzyme becomes the pyruvoyl prosthetic group, which constitutes an essential element of the active site of the mature decarboxylase.

Its subcellular location is the cell membrane. It catalyses the reaction a 1,2-diacyl-sn-glycero-3-phospho-L-serine + H(+) = a 1,2-diacyl-sn-glycero-3-phosphoethanolamine + CO2. Its pathway is phospholipid metabolism; phosphatidylethanolamine biosynthesis; phosphatidylethanolamine from CDP-diacylglycerol: step 2/2. In terms of biological role, catalyzes the formation of phosphatidylethanolamine (PtdEtn) from phosphatidylserine (PtdSer). The chain is Phosphatidylserine decarboxylase proenzyme from Saccharophagus degradans (strain 2-40 / ATCC 43961 / DSM 17024).